Reading from the N-terminus, the 155-residue chain is Small ribosomal subunit protein uS7 (155 aa).

It belongs to the universal ribosomal protein uS7 family. Part of the 30S ribosomal subunit. Contacts proteins S9 and S11.

Functionally, one of the primary rRNA binding proteins, it binds directly to 16S rRNA where it nucleates assembly of the head domain of the 30S subunit. Is located at the subunit interface close to the decoding center, probably blocks exit of the E-site tRNA. This chain is Small ribosomal subunit protein uS7, found in Helicobacter hepaticus (strain ATCC 51449 / 3B1).